The sequence spans 985 residues: MPESLIAGIPVHFPFEPYPVQRAYMEKVIQCLRDGTNGVLESPTGTGKTLSLLCSSLAWIRTRQSEHQQQMVKMEKADFTGLGGGAAGGDLSELAKTMGRANNWGVPKVIYASRTHSQLTQAMRELKRTAYANMRSVVLGSRDQLCIHPEVMREQGNSNKTNMCKLRVHSKTCSFQMRVESRKDHPDLRGPSIMDIEDLVKVGQRLKICPYFASRELVPQADITFMPYNYLLDPKARKANKIELGNTIVILDEAHNIEKICEESASVQIKSSDVAMAIEDVTHIMQVFASGESQDMGGDEPKDFTLDDLTLLKEMLLEFEKAIDAVVVENAVEGTTFPASMMYELLGKANFTYGNVATIVSLLDKLVQYLLVASQQMTIRKGGTFTMLSDLLTIVFANKEDVMSKVYASFKVHVQLEEVKQGHGKQQGGKQHGGWLGKGTIAAATGSIKVAKIINFWCFNPGFGMEQLLNTQVRSVILTSGTLAPLKPLIAELAIPVAQHLENPHIVDQSQVYVKIIGTGPDRQQLISNYANRDNPKYISSLGQTILNVSRIVPDGLLVFFPSYPMLNKCVDAWQASGLWADISVKKPIFLEPRSKDQFTSTMEEFYQAIRDSKGAVFMAVCRGKVSEGLDFADRNGRAVIITGLPFPPLKDPKVILKRRYLEANRTRENQLLSGQEWYNLDATRAVNQAIGRVIRHRNDYGAILLCDSRFKDASQVQQLSKWIRGHLGDRPQCSPFGPIVRELRQFFKNAEANMKLPDERETDSPLETVCKTENEPIAAIPKVKREPGSNATFKSANESAIKVEMANSIKTWTPADYASAAGRKLGGAAPNAMDFMSRLDSNVSSIDFNCCMDSKSGSSGMVKIHKRERSSPTQPESSSQVSKKRYKLVENIKVEPSSSQVKEAPAERADFLRELRSLVTQDQFRRFGKALLEYKDGTYESFQALMVILLDVLSAPKVRYMLVGMRKYLKNEHKDEFDQKVGKL.

Residues 7–303 (AGIPVHFPFE…QDMGGDEPKD (297 aa)) enclose the Helicase ATP-binding domain. 42-49 (SPTGTGKT) is a binding site for ATP. [4Fe-4S] cluster is bound by residues C146, C164, C173, and C209. Residues 252 to 255 (DEAH) carry the DEAH box motif. The segment at 858–884 (GSSGMVKIHKRERSSPTQPESSSQVSK) is disordered. Over residues 872-882 (SPTQPESSSQV) the composition is skewed to polar residues. T874 carries the phosphothreonine modification.

This sequence belongs to the helicase family. RAD3/XPD subfamily.

Its subcellular location is the nucleus. It catalyses the reaction ATP + H2O = ADP + phosphate + H(+). Functionally, a probable ATP-dependent DNA helicase implicated in DNA repair and the maintenance of genomic stability. Acts as an anti-recombinase to counteract toxic recombination and limit crossover during meiosis. Regulates meiotic recombination and crossover homeostasis by physically dissociating strand invasion events and thereby promotes noncrossover repair by meiotic synthesis dependent strand annealing (SDSA) as well as disassembly of D loop recombination intermediates. The protein is Regulator of telomere elongation helicase 1 homolog of Drosophila yakuba (Fruit fly).